A 207-amino-acid polypeptide reads, in one-letter code: MLSAQLNDYLAEVGLTATEQQKKQLVDFVGMLNKWNKAFNLTSVRDPEQMLIRHIMDSLVVSPHLKGSRFIDVGTGPGLPGIPLAILNPDKEFVLLDSLGKRIRFQKQVQFELGINNISSIESRVEAYQPEELFDGVLSRAFASIQDMLHWCHHLPKADGCFYALKGQLSEDEMAQLPAGFVVTDIFELKVPKLDEQRHLLRVIKQD.

S-adenosyl-L-methionine-binding positions include Gly-74, Leu-79, 125 to 126, and Arg-140; that span reads VE.

It belongs to the methyltransferase superfamily. RNA methyltransferase RsmG family.

The protein localises to the cytoplasm. The catalysed reaction is guanosine(527) in 16S rRNA + S-adenosyl-L-methionine = N(7)-methylguanosine(527) in 16S rRNA + S-adenosyl-L-homocysteine. Functionally, specifically methylates the N7 position of guanine in position 527 of 16S rRNA. The chain is Ribosomal RNA small subunit methyltransferase G from Shewanella halifaxensis (strain HAW-EB4).